The following is a 72-amino-acid chain: MAKEDSIRMQGVIVDTLPNTMFRVELENGHVVTAHISGKMRKHYIRILTGDKVTVELTPYDLNKGRIVYRER.

The region spanning 1–72 (MAKEDSIRMQ…NKGRIVYRER (72 aa)) is the S1-like domain.

The protein belongs to the IF-1 family. In terms of assembly, component of the 30S ribosomal translation pre-initiation complex which assembles on the 30S ribosome in the order IF-2 and IF-3, IF-1 and N-formylmethionyl-tRNA(fMet); mRNA recruitment can occur at any time during PIC assembly.

The protein localises to the cytoplasm. Its function is as follows. One of the essential components for the initiation of protein synthesis. Stabilizes the binding of IF-2 and IF-3 on the 30S subunit to which N-formylmethionyl-tRNA(fMet) subsequently binds. Helps modulate mRNA selection, yielding the 30S pre-initiation complex (PIC). Upon addition of the 50S ribosomal subunit IF-1, IF-2 and IF-3 are released leaving the mature 70S translation initiation complex. The chain is Translation initiation factor IF-1 from Halorhodospira halophila (strain DSM 244 / SL1) (Ectothiorhodospira halophila (strain DSM 244 / SL1)).